The primary structure comprises 76 residues: U14-hexatoxin-Hi1a (76 aa).

Positions 1 to 18 (MMQLAVLICLSLVVNTFA) are cleaved as a signal peptide. 3 cysteine pairs are disulfide-bonded: Cys-21/Cys-34, Cys-27/Cys-39, and Cys-33/Cys-61.

In terms of tissue distribution, expressed by the venom gland.

Its subcellular location is the secreted. Functionally, probable ion channel inhibitor. The polypeptide is U14-hexatoxin-Hi1a (Hadronyche infensa (Fraser island funnel-web spider)).